Reading from the N-terminus, the 225-residue chain is Enolase-phosphatase E1 (225 aa).

Belongs to the HAD-like hydrolase superfamily. MasA/MtnC family. In terms of assembly, monomer. Requires Mg(2+) as cofactor.

It carries out the reaction 5-methylsulfanyl-2,3-dioxopentyl phosphate + H2O = 1,2-dihydroxy-5-(methylsulfanyl)pent-1-en-3-one + phosphate. It functions in the pathway amino-acid biosynthesis; L-methionine biosynthesis via salvage pathway; L-methionine from S-methyl-5-thio-alpha-D-ribose 1-phosphate: step 3/6. The protein operates within amino-acid biosynthesis; L-methionine biosynthesis via salvage pathway; L-methionine from S-methyl-5-thio-alpha-D-ribose 1-phosphate: step 4/6. Its function is as follows. Bifunctional enzyme that catalyzes the enolization of 2,3-diketo-5-methylthiopentyl-1-phosphate (DK-MTP-1-P) into the intermediate 2-hydroxy-3-keto-5-methylthiopentenyl-1-phosphate (HK-MTPenyl-1-P), which is then dephosphorylated to form the acireductone 1,2-dihydroxy-3-keto-5-methylthiopentene (DHK-MTPene). The polypeptide is Enolase-phosphatase E1 (Pseudomonas aeruginosa (strain LESB58)).